Here is a 717-residue protein sequence, read N- to C-terminus: Mitochondrial potassium channel ATP-binding subunit (717 aa).

The transit peptide at 1 to 25 (MLVHLFRFGIRGGPVPGWSLQSLRF) directs the protein to the mitochondrion. A run of 4 helical transmembrane segments spans residues 127–147 (LLAL…NVQI), 178–198 (VQLL…LVLL), 278–298 (LMLA…GSGL), and 365–385 (NIAF…LVAG). The 288-residue stretch at 132-419 (AAIVLALGAA…LSVLFGQVVR (288 aa)) folds into the ABC transmembrane type-1 domain. An ABC transporter domain is found at 454–691 (ITFQNVTFSY…GGLYSELIRR (238 aa)). ATP is bound at residue 489-496 (GQSGGGKT). Residues 695-717 (DASLTSTPPAEKPEDPKSCQSKA) are disordered.

Belongs to the ABC transporter superfamily. ABCB family. Multidrug resistance exporter (TC 3.A.1.201) subfamily. In terms of assembly, the mitochondrial potassium channel (mitoK(ATP)) is composed of 4 subunits of CCDC51/MITOK and 4 subunits of ABCB8/MITOSUR. Interacts with PAAT. Interacts with NRP1; NRP1 regulates ABCB8/MITOSUR protein levels in mitochondria.

The protein localises to the mitochondrion inner membrane. Channel activity inhibited by ATP via ABCB8/MITOSUR subunit. In terms of biological role, ATP-binding subunit of the mitochondrial ATP-gated potassium channel (mitoK(ATP)). Together with pore-forming subunit CCDC51/MITOK of the mitoK(ATP) channel, mediates ATP-dependent potassium currents across the mitochondrial inner membrane. An increase in ATP intracellular levels closes the channel, inhibiting K(+) transport, whereas a decrease in ATP levels enhances K(+) uptake in the mitochondrial matrix. Plays a role in mitochondrial iron transport. Required for maintenance of normal cardiac function, possibly by influencing mitochondrial iron export and regulating the maturation of cytosolic iron sulfur cluster-containing enzymes. This is Mitochondrial potassium channel ATP-binding subunit from Mus musculus (Mouse).